Here is a 271-residue protein sequence, read N- to C-terminus: Glutamate racemase (271 aa).

Substrate contacts are provided by residues 13–14 and 45–46; these read DS and YG. Cysteine 77 serves as the catalytic Proton donor/acceptor. 78–79 provides a ligand contact to substrate; the sequence is NT. Catalysis depends on cysteine 192, which acts as the Proton donor/acceptor. 193–194 contacts substrate; sequence TH.

The protein belongs to the aspartate/glutamate racemases family.

The catalysed reaction is L-glutamate = D-glutamate. Its pathway is cell wall biogenesis; peptidoglycan biosynthesis. In terms of biological role, provides the (R)-glutamate required for cell wall biosynthesis. In Sinorhizobium medicae (strain WSM419) (Ensifer medicae), this protein is Glutamate racemase.